We begin with the raw amino-acid sequence, 197 residues long: NADH-quinone oxidoreductase subunit C (197 aa).

It belongs to the complex I 30 kDa subunit family. NDH-1 is composed of 14 different subunits. Subunits NuoB, C, D, E, F, and G constitute the peripheral sector of the complex.

The protein localises to the cell inner membrane. It catalyses the reaction a quinone + NADH + 5 H(+)(in) = a quinol + NAD(+) + 4 H(+)(out). Functionally, NDH-1 shuttles electrons from NADH, via FMN and iron-sulfur (Fe-S) centers, to quinones in the respiratory chain. The immediate electron acceptor for the enzyme in this species is believed to be ubiquinone. Couples the redox reaction to proton translocation (for every two electrons transferred, four hydrogen ions are translocated across the cytoplasmic membrane), and thus conserves the redox energy in a proton gradient. The protein is NADH-quinone oxidoreductase subunit C of Rickettsia prowazekii (strain Madrid E).